Here is a 336-residue protein sequence, read N- to C-terminus: Glycerol-3-phosphate dehydrogenase [NAD(P)+] (336 aa).

Positions 14, 15, 35, 36, and 109 each coordinate NADPH. Sn-glycerol 3-phosphate is bound by residues lysine 109 and glycine 139. Alanine 143 is an NADPH binding site. Sn-glycerol 3-phosphate-binding residues include lysine 194, aspartate 247, serine 257, arginine 258, and asparagine 259. Lysine 194 acts as the Proton acceptor in catalysis. NADPH is bound at residue arginine 258. Glutamate 284 is a binding site for NADPH.

The protein belongs to the NAD-dependent glycerol-3-phosphate dehydrogenase family.

It is found in the cytoplasm. The catalysed reaction is sn-glycerol 3-phosphate + NAD(+) = dihydroxyacetone phosphate + NADH + H(+). It carries out the reaction sn-glycerol 3-phosphate + NADP(+) = dihydroxyacetone phosphate + NADPH + H(+). It functions in the pathway membrane lipid metabolism; glycerophospholipid metabolism. Its function is as follows. Catalyzes the reduction of the glycolytic intermediate dihydroxyacetone phosphate (DHAP) to sn-glycerol 3-phosphate (G3P), the key precursor for phospholipid synthesis. This Streptomyces coelicolor (strain ATCC BAA-471 / A3(2) / M145) protein is Glycerol-3-phosphate dehydrogenase [NAD(P)+].